A 758-amino-acid chain; its full sequence is Vitamin K-dependent gamma-carboxylase (758 aa).

A disordered region spans residues 1–31 (MAVSARSARSPPDSDKVQKDKAGQTSGRRQG). At A2 the chain carries N-acetylalanine. Residues 2 to 60 (AVSARSARSPPDSDKVQKDKAGQTSGRRQGSRMGKLLGFEWTDVSSWGKLVTLLNRPTD) lie on the Cytoplasmic side of the membrane. Residues 12–22 (PDSDKVQKDKA) show a composition bias toward basic and acidic residues. A helical membrane pass occupies residues 61-81 (PASLAVFRFLFGLMMVLDIPQ). Over 82–113 (ERGLSSLDRRYLDGLEVCRFPLLDALQPLPLD) the chain is Lumenal. An intrachain disulfide couples C99 to C450. The chain crosses the membrane as a helical span at residues 114 to 134 (WMYLVYTIMFLGALGMMLGLR). Residues 135 to 136 (YR) lie on the Cytoplasmic side of the membrane. A helical transmembrane segment spans residues 137–157 (ISCVLFLLPYWYVFLLDKTSW). The Lumenal portion of the chain corresponds to 158 to 292 (NNHSYLYGLL…VSYFHCMNSQ (135 aa)). A helical transmembrane segment spans residues 293–313 (LFSIGMFPYVMLASSPLFCSP). Residues 314 to 361 (EWPRKLVAHCPKRLQELLPLRTAPQPSASCVYKRSRAKGGQKPGLRHR) are Cytoplasmic-facing. A helical membrane pass occupies residues 362 to 382 (LGAAFTLLYLLEQLFLPYSHF). Residues 383–758 (LTQGYNNWTN…PNADAVHSEF (376 aa)) lie on the Lumenal side of the membrane. Residues 727–758 (PFEPVGEPSPSNTDSSNPNPSEPNADAVHSEF) are disordered. A compositionally biased stretch (low complexity) spans 734 to 750 (PSPSNTDSSNPNPSEPN).

The protein belongs to the vitamin K-dependent gamma-carboxylase family. In terms of assembly, monomer. May interact with CALU.

The protein localises to the endoplasmic reticulum membrane. It carries out the reaction 4-carboxy-L-glutamyl-[protein] + 2,3-epoxyphylloquinone + H2O + H(+) = phylloquinol + L-glutamyl-[protein] + CO2 + O2. Its function is as follows. Mediates the vitamin K-dependent carboxylation of glutamate residues to calcium-binding gamma-carboxyglutamate (Gla) residues with the concomitant conversion of the reduced hydroquinone form of vitamin K to vitamin K epoxide. Catalyzes gamma-carboxylation of various proteins, such as blood coagulation factors (F2, F7, F9 and F10), osteocalcin (BGLAP) or matrix Gla protein (MGP). This chain is Vitamin K-dependent gamma-carboxylase (GGCX), found in Delphinapterus leucas (Beluga whale).